The following is a 1857-amino-acid chain: Fer-1-like protein 6 (1857 aa).

Residues 1 to 1824 (MFGLKVKKKR…YLIWKNYKKY (1824 aa)) lie on the Cytoplasmic side of the membrane. A disordered region spans residues 15 to 63 (KGLILANKAAKDSQGDTEALQEEPSHQEGPRGDLVHDDASIFPVPSASP). Basic and acidic residues predominate over residues 37-53 (EPSHQEGPRGDLVHDDA). C2 domains are found at residues 65–181 (RRSK…QFCN) and 225–356 (PIEK…DKGF). The span at 426–447 (SKDKDSKSSKGKDKADKTEDGK) shows a compositional bias: basic and acidic residues. The interval 426 to 469 (SKDKDSKSSKGKDKADKTEDGKSQQASNKTNSTEVEVESFDVPP) is disordered. Over residues 448–459 (SQQASNKTNSTE) the composition is skewed to polar residues. 2 C2 domains span residues 810 to 937 (GTNH…RLCY) and 969 to 1099 (PVEP…LAPI). Positions 842, 848, 904, and 906 each coordinate Ca(2+). Disordered stretches follow at residues 1101–1148 (QVDG…VVPD), 1161–1203 (PDSS…RTIA), and 1224–1246 (AQKA…PDEV). The segment covering 1113–1129 (DSLTATESSGAHSSSQD) has biased composition (polar residues). A compositionally biased stretch (basic and acidic residues) spans 1178 to 1189 (PPKDGKPKDPRK). Positions 1190–1200 (PSRRSTKRRKR) are enriched in basic residues. Basic and acidic residues predominate over residues 1226–1245 (KAKERNPKGKKGNTEAKPDE). C2 domains are found at residues 1338 to 1457 (DSGQ…AICG) and 1578 to 1729 (DMPQ…KACD). Positions 1372, 1378, 1427, 1429, and 1435 each coordinate Ca(2+). The helical transmembrane segment at 1825-1845 (IIIAFILIILIIFLVLFIYTL) threads the bilayer. At 1846-1857 (PGAISRRIVVGS) the chain is on the extracellular side.

The protein belongs to the ferlin family. It depends on Ca(2+) as a cofactor.

Its subcellular location is the membrane. The sequence is that of Fer-1-like protein 6 (FER1L6) from Homo sapiens (Human).